The sequence spans 1293 residues: Phosphoribosylformylglycinamidine synthase (1293 aa).

ATP contacts are provided by residues 305–316 (GAATGSGGEIRD), 384–386 (TGY), and Ala-676. Residues 307-326 (ATGSGGEIRDEGATGRGSKP) are disordered. Residues Asp-677, Glu-716, Asn-720, and Asp-884 each coordinate Mg(2+). ATP is bound at residue Ser-886. The Glutamine amidotransferase type-1 domain maps to 1040–1293 (MAILREQGVN…MFRNARVKIG (254 aa)). Cys-1133 acts as the Nucleophile in catalysis. Residues His-1258 and Glu-1260 contribute to the active site.

The protein in the N-terminal section; belongs to the FGAMS family. Monomer.

The protein resides in the cytoplasm. It catalyses the reaction N(2)-formyl-N(1)-(5-phospho-beta-D-ribosyl)glycinamide + L-glutamine + ATP + H2O = 2-formamido-N(1)-(5-O-phospho-beta-D-ribosyl)acetamidine + L-glutamate + ADP + phosphate + H(+). It participates in purine metabolism; IMP biosynthesis via de novo pathway; 5-amino-1-(5-phospho-D-ribosyl)imidazole from N(2)-formyl-N(1)-(5-phospho-D-ribosyl)glycinamide: step 1/2. Its function is as follows. Phosphoribosylformylglycinamidine synthase involved in the purines biosynthetic pathway. Catalyzes the ATP-dependent conversion of formylglycinamide ribonucleotide (FGAR) and glutamine to yield formylglycinamidine ribonucleotide (FGAM) and glutamate. This chain is Phosphoribosylformylglycinamidine synthase, found in Shewanella frigidimarina (strain NCIMB 400).